The sequence spans 272 residues: 3-methyl-2-oxobutanoate hydroxymethyltransferase (272 aa).

Mg(2+) is bound by residues Asp-51 and Asp-90. 3-methyl-2-oxobutanoate contacts are provided by residues 51–52 (DS), Asp-90, and Lys-118. Position 120 (Glu-120) interacts with Mg(2+). The active-site Proton acceptor is the Glu-187.

Belongs to the PanB family. As to quaternary structure, homodecamer; pentamer of dimers. Requires Mg(2+) as cofactor.

Its subcellular location is the cytoplasm. It catalyses the reaction 3-methyl-2-oxobutanoate + (6R)-5,10-methylene-5,6,7,8-tetrahydrofolate + H2O = 2-dehydropantoate + (6S)-5,6,7,8-tetrahydrofolate. The protein operates within cofactor biosynthesis; (R)-pantothenate biosynthesis; (R)-pantoate from 3-methyl-2-oxobutanoate: step 1/2. Its function is as follows. Catalyzes the reversible reaction in which hydroxymethyl group from 5,10-methylenetetrahydrofolate is transferred onto alpha-ketoisovalerate to form ketopantoate. The chain is 3-methyl-2-oxobutanoate hydroxymethyltransferase from Xylella fastidiosa (strain 9a5c).